We begin with the raw amino-acid sequence, 494 residues long: Glutamyl-tRNA(Gln) amidotransferase subunit A (494 aa).

Active-site charge relay system residues include lysine 81 and serine 156. Serine 180 functions as the Acyl-ester intermediate in the catalytic mechanism.

Belongs to the amidase family. GatA subfamily. As to quaternary structure, heterotrimer of A, B and C subunits.

It carries out the reaction L-glutamyl-tRNA(Gln) + L-glutamine + ATP + H2O = L-glutaminyl-tRNA(Gln) + L-glutamate + ADP + phosphate + H(+). Its function is as follows. Allows the formation of correctly charged Gln-tRNA(Gln) through the transamidation of misacylated Glu-tRNA(Gln) in organisms which lack glutaminyl-tRNA synthetase. The reaction takes place in the presence of glutamine and ATP through an activated gamma-phospho-Glu-tRNA(Gln). The chain is Glutamyl-tRNA(Gln) amidotransferase subunit A from Mycobacterium tuberculosis (strain ATCC 25177 / H37Ra).